The chain runs to 145 residues: Deoxyuridine 5'-triphosphate nucleotidohydrolase (145 aa).

Residues 62–64 (RSG), N75, 79–81 (TVD), and K89 each bind substrate.

Belongs to the dUTPase family. Requires Mg(2+) as cofactor.

It carries out the reaction dUTP + H2O = dUMP + diphosphate + H(+). It functions in the pathway pyrimidine metabolism; dUMP biosynthesis; dUMP from dCTP (dUTP route): step 2/2. Functionally, this enzyme is involved in nucleotide metabolism: it produces dUMP, the immediate precursor of thymidine nucleotides and it decreases the intracellular concentration of dUTP so that uracil cannot be incorporated into DNA. This chain is Deoxyuridine 5'-triphosphate nucleotidohydrolase, found in Helicobacter pylori (strain J99 / ATCC 700824) (Campylobacter pylori J99).